A 312-amino-acid polypeptide reads, in one-letter code: Methionyl-tRNA formyltransferase (312 aa).

Residue 112–115 (SLLP) coordinates (6S)-5,6,7,8-tetrahydrofolate.

Belongs to the Fmt family.

It carries out the reaction L-methionyl-tRNA(fMet) + (6R)-10-formyltetrahydrofolate = N-formyl-L-methionyl-tRNA(fMet) + (6S)-5,6,7,8-tetrahydrofolate + H(+). Its function is as follows. Attaches a formyl group to the free amino group of methionyl-tRNA(fMet). The formyl group appears to play a dual role in the initiator identity of N-formylmethionyl-tRNA by promoting its recognition by IF2 and preventing the misappropriation of this tRNA by the elongation apparatus. This is Methionyl-tRNA formyltransferase from Dehalococcoides mccartyi (strain CBDB1).